We begin with the raw amino-acid sequence, 312 residues long: Pyridoxal kinase (312 aa).

Methionine 1 carries the N-acetylmethionine modification. Positions 12 and 47 each coordinate pyridoxal 5'-phosphate. Residues serine 12 and threonine 47 each contribute to the pyridoxamine site. Residue serine 59 is modified to Phosphoserine. Residue aspartate 113 participates in K(+) binding. Tyrosine 127 serves as a coordination point for pyridoxal 5'-phosphate. Residue threonine 148 coordinates K(+). Asparagine 150 is an ADP binding site. Asparagine 150 serves as a coordination point for ATP. At serine 164 the chain carries Phosphoserine. Threonine 186 is a binding site for K(+). 186 to 187 (TS) contacts ADP. An ATP-binding site is contributed by 186–187 (TS). A Phosphoserine modification is found at serine 213. Residues 223–226 (MHKV) and 233–234 (TG) each bind ADP. Residues 223–226 (MHKV) and 233–234 (TG) each bind ATP. 232-235 (GTGD) is a pyridoxal 5'-phosphate binding site. Aspartate 235 lines the pyridoxamine pocket. Aspartate 235 serves as the catalytic Proton acceptor. Position 285 is a phosphoserine (serine 285).

It belongs to the pyridoxine kinase family. In terms of assembly, homodimer. It depends on Zn(2+) as a cofactor. Requires Mg(2+) as cofactor. Ubiquitous.

The protein resides in the cytoplasm. Its subcellular location is the cytosol. It catalyses the reaction pyridoxal + ATP = pyridoxal 5'-phosphate + ADP + H(+). The catalysed reaction is pyridoxamine + ATP = pyridoxamine 5'-phosphate + ADP + H(+). It carries out the reaction pyridoxine + ATP = pyridoxine 5'-phosphate + ADP + H(+). It functions in the pathway cofactor metabolism; pyridoxal 5'-phosphate salvage; pyridoxal 5'-phosphate from pyridoxal: step 1/1. The protein operates within cofactor metabolism; pyridoxal 5'-phosphate salvage; pyridoxine 5'-phosphate from pyridoxine: step 1/1. It participates in cofactor metabolism; pyridoxal 5'-phosphate salvage; pyridoxamine 5'-phosphate from pyridoxamine: step 1/1. Activated by K(+). Activity is increased in the presence of Na(+). In terms of biological role, catalyzes the phosphorylation of the dietary vitamin B6 vitamers pyridoxal (PL), pyridoxine (PN) and pyridoxamine (PM) to form pyridoxal 5'-phosphate (PLP), pyridoxine 5'-phosphate (PNP) and pyridoxamine 5'-phosphate (PMP), respectively. PLP is the active form of vitamin B6, and acts as a cofactor for over 140 different enzymatic reactions. The sequence is that of Pyridoxal kinase (PDXK) from Ovis aries (Sheep).